Here is a 349-residue protein sequence, read N- to C-terminus: Ferredoxin--NADP reductase (349 aa).

Asp43, Gln51, Tyr56, Val96, Phe131, Asp295, and Ser336 together coordinate FAD.

It belongs to the ferredoxin--NADP reductase type 2 family. Homodimer. FAD serves as cofactor.

It catalyses the reaction 2 reduced [2Fe-2S]-[ferredoxin] + NADP(+) + H(+) = 2 oxidized [2Fe-2S]-[ferredoxin] + NADPH. The sequence is that of Ferredoxin--NADP reductase from Paraburkholderia phytofirmans (strain DSM 17436 / LMG 22146 / PsJN) (Burkholderia phytofirmans).